Here is a 303-residue protein sequence, read N- to C-terminus: Dihydroorotate dehydrogenase B (NAD(+)), catalytic subunit (303 aa).

FMN-binding positions include Ser21 and 45 to 46 (KG). Residues Lys45 and 69–73 (NAVGL) contribute to the substrate site. Positions 99 and 127 each coordinate FMN. Asn127 is a binding site for substrate. The active-site Nucleophile is the Cys130. FMN is bound by residues Lys165 and Ile191. 192-193 (NT) is a substrate binding site. Residues Gly217, 243–244 (GG), and 265–266 (GT) contribute to the FMN site.

The protein belongs to the dihydroorotate dehydrogenase family. Type 1 subfamily. As to quaternary structure, heterotetramer of 2 PyrK and 2 PyrD type B subunits. It depends on FMN as a cofactor.

It is found in the cytoplasm. The enzyme catalyses (S)-dihydroorotate + NAD(+) = orotate + NADH + H(+). It functions in the pathway pyrimidine metabolism; UMP biosynthesis via de novo pathway; orotate from (S)-dihydroorotate (NAD(+) route): step 1/1. Functionally, catalyzes the conversion of dihydroorotate to orotate with NAD(+) as electron acceptor. The protein is Dihydroorotate dehydrogenase B (NAD(+)), catalytic subunit (pyrD) of Phocaeicola vulgatus (strain ATCC 8482 / DSM 1447 / JCM 5826 / CCUG 4940 / NBRC 14291 / NCTC 11154) (Bacteroides vulgatus).